The primary structure comprises 371 residues: Queuine tRNA-ribosyltransferase (371 aa).

Aspartate 89 serves as the catalytic Proton acceptor. Residues 89–93, aspartate 143, glutamine 185, and glycine 212 each bind substrate; that span reads DSGGF. The tract at residues 243–249 is RNA binding; sequence GVGKPED. The active-site Nucleophile is aspartate 262. Positions 267–271 are RNA binding; important for wobble base 34 recognition; that stretch reads TRNAR. Cysteine 300, cysteine 302, cysteine 305, and histidine 331 together coordinate Zn(2+).

This sequence belongs to the queuine tRNA-ribosyltransferase family. As to quaternary structure, homodimer. Within each dimer, one monomer is responsible for RNA recognition and catalysis, while the other monomer binds to the replacement base PreQ1. Requires Zn(2+) as cofactor.

It catalyses the reaction 7-aminomethyl-7-carbaguanine + guanosine(34) in tRNA = 7-aminomethyl-7-carbaguanosine(34) in tRNA + guanine. The protein operates within tRNA modification; tRNA-queuosine biosynthesis. Its function is as follows. Catalyzes the base-exchange of a guanine (G) residue with the queuine precursor 7-aminomethyl-7-deazaguanine (PreQ1) at position 34 (anticodon wobble position) in tRNAs with GU(N) anticodons (tRNA-Asp, -Asn, -His and -Tyr). Catalysis occurs through a double-displacement mechanism. The nucleophile active site attacks the C1' of nucleotide 34 to detach the guanine base from the RNA, forming a covalent enzyme-RNA intermediate. The proton acceptor active site deprotonates the incoming PreQ1, allowing a nucleophilic attack on the C1' of the ribose to form the product. After dissociation, two additional enzymatic reactions on the tRNA convert PreQ1 to queuine (Q), resulting in the hypermodified nucleoside queuosine (7-(((4,5-cis-dihydroxy-2-cyclopenten-1-yl)amino)methyl)-7-deazaguanosine). This chain is Queuine tRNA-ribosyltransferase, found in Pseudomonas syringae pv. tomato (strain ATCC BAA-871 / DC3000).